Here is a 378-residue protein sequence, read N- to C-terminus: Erythronate-4-phosphate dehydrogenase (378 aa).

Substrate contacts are provided by Ser-45 and Thr-66. NAD(+) contacts are provided by Asp-146 and Thr-175. Arg-208 is an active-site residue. Asp-232 contributes to the NAD(+) binding site. Glu-237 is an active-site residue. His-254 (proton donor) is an active-site residue. Gly-257 contributes to the NAD(+) binding site. Tyr-258 lines the substrate pocket.

Belongs to the D-isomer specific 2-hydroxyacid dehydrogenase family. PdxB subfamily. In terms of assembly, homodimer.

The protein resides in the cytoplasm. It carries out the reaction 4-phospho-D-erythronate + NAD(+) = (R)-3-hydroxy-2-oxo-4-phosphooxybutanoate + NADH + H(+). Its pathway is cofactor biosynthesis; pyridoxine 5'-phosphate biosynthesis; pyridoxine 5'-phosphate from D-erythrose 4-phosphate: step 2/5. In terms of biological role, catalyzes the oxidation of erythronate-4-phosphate to 3-hydroxy-2-oxo-4-phosphonooxybutanoate. The polypeptide is Erythronate-4-phosphate dehydrogenase (Enterobacter sp. (strain 638)).